The sequence spans 734 residues: MTLRFPRFSQGLAQDPTTRRIWFGIATAHDFESHDDITEERLYQNIFASHFGQLAIIFLWTSGNLFHVAWQGNFESWIQDPLHVRPIAHAIWDPHFGQPAVEAFTRGGAIGPVNIAYSGVYQWWYTIGLRTNGDLYTGALFLLLLSAISLIASWLHLQPKWKPSVSWFKNAESRLNHHLSGLFGVSSLAWTGHLVHVAIPGSRGEYVRWNNFLEVLPYPQGLGPLFMGQWNLYAQNPDSSNHLFGTSQGAGTAILTLLGGFHPQTQSLWLTDIAHHHLAIAFLFLVAGHMYRTNFGIGHSIKDLLEAHIPPGGRLGRGHKGLYDTINNSLHFQLGLALASLGVITSLVAQHMYSLPAYAFIAQDFTTQAALYTHHQYIAGFIMTGAFAHGAIFFIRDYNPEQNEDNVLARMLDHKEAITSHLSWASLFLGFHTLGLYVHNDVMLAFGTPEKQILIEPIFAQWIQSAHGKTSYGFDVLLSSTNSPAFNAGRSIWLPGWLNAINENSNSLFLTIGPGDFLVHHAIALGLHTTTLILVKGALDARGSKLMPDKKDFGYSFPCDGPGRGGTCDISAWDAFYLAVFWMLNTIGWVTFYWHWKHITLWQGNVSQFNESSTYLMGWLRDYLWLNSSQLINGYNPFGMNSLSVWAWMFLFGHLVWATGFMFLISWRGYWQELIETLAWAHERTPLANLIRWKDKPVALSIVQARLVGLVHFSVGYIFTYAAFLIASTSGKFG.

The next 8 membrane-spanning stretches (helical) occupy residues 46–69 (IFAS…FHVA), 135–158 (LYTG…LHLQ), 175–199 (LNHH…HVAI), 273–291 (IAHH…GHMY), 330–353 (LHFQ…QHMY), 369–395 (AALY…IFFI), 417–439 (AITS…LYVH), and 517–535 (FLVH…LILV). Residues cysteine 559 and cysteine 568 each contribute to the [4Fe-4S] cluster site. 2 helical membrane passes run 575 to 596 (AFYL…YWHW) and 643 to 665 (LSVW…MFLI). Chlorophyll a-binding residues include histidine 654, methionine 662, and tyrosine 670. Residue tryptophan 671 coordinates phylloquinone. Residues 707-727 (LVGLVHFSVGYIFTYAAFLIA) traverse the membrane as a helical segment.

It belongs to the PsaA/PsaB family. As to quaternary structure, the PsaA/B heterodimer binds the P700 chlorophyll special pair and subsequent electron acceptors. PSI consists of a core antenna complex that captures photons, and an electron transfer chain that converts photonic excitation into a charge separation. The eukaryotic PSI reaction center is composed of at least 11 subunits. The cofactor is P700 is a chlorophyll a/chlorophyll a' dimer, A0 is one or more chlorophyll a, A1 is one or both phylloquinones and FX is a shared 4Fe-4S iron-sulfur center..

The protein localises to the plastid. Its subcellular location is the chloroplast thylakoid membrane. The enzyme catalyses reduced [plastocyanin] + hnu + oxidized [2Fe-2S]-[ferredoxin] = oxidized [plastocyanin] + reduced [2Fe-2S]-[ferredoxin]. PsaA and PsaB bind P700, the primary electron donor of photosystem I (PSI), as well as the electron acceptors A0, A1 and FX. PSI is a plastocyanin-ferredoxin oxidoreductase, converting photonic excitation into a charge separation, which transfers an electron from the donor P700 chlorophyll pair to the spectroscopically characterized acceptors A0, A1, FX, FA and FB in turn. Oxidized P700 is reduced on the lumenal side of the thylakoid membrane by plastocyanin. This is Photosystem I P700 chlorophyll a apoprotein A2 from Phalaenopsis aphrodite subsp. formosana (Moth orchid).